Reading from the N-terminus, the 448-residue chain is Protease Do-like 8, chloroplastic (448 aa).

The interval 152–333 (EGNGSGVVWD…IPSSTVLKIV (182 aa)) is serine protease. Residues histidine 171, aspartate 214, and serine 292 each act as charge relay system in the active site. Residues 336-433 (LIQFSKVLRA…DKVTLKIKRG (98 aa)) form the PDZ domain.

Belongs to the peptidase S1C family.

It localises to the plastid. It is found in the chloroplast thylakoid lumen. Its function is as follows. Probable serine protease. This Arabidopsis thaliana (Mouse-ear cress) protein is Protease Do-like 8, chloroplastic (DEGP8).